The sequence spans 176 residues: Dual-action ribosomal maturation protein DarP (176 aa).

Positions 1–10 (MTVPNHQQDI) are enriched in polar residues. Positions 1 to 22 (MTVPNHQQDISDSDLESRPSKT) are disordered.

It belongs to the DarP family.

The protein resides in the cytoplasm. Its function is as follows. Member of a network of 50S ribosomal subunit biogenesis factors which assembles along the 30S-50S interface, preventing incorrect 23S rRNA structures from forming. Promotes peptidyl transferase center (PTC) maturation. This chain is Dual-action ribosomal maturation protein DarP, found in Nitrosomonas eutropha (strain DSM 101675 / C91 / Nm57).